The sequence spans 577 residues: Hemagglutinin-neuraminidase (577 aa).

Over 1–26 (MDRAVSQVALENDEREAKNTWRLIFR) the chain is Intravirion. The chain crosses the membrane as a helical span at residues 27-47 (IAILLLTVVTLATSVASLVYS). At 48-577 (MGASTPSDLV…NDGVREARSG (530 aa)) the chain is on the virion surface side. A glycan (N-linked (GlcNAc...) asparagine; by host) is linked at asparagine 119. The important for interaction with fusion/F protein stretch occupies residues 124–152 (GAPIHDPDFIGGIGKELIVDDASDVTSFY). 3 disulfides stabilise this stretch: cysteine 172–cysteine 196, cysteine 186–cysteine 247, and cysteine 238–cysteine 251. The segment at 234–239 (NRKSCS) is involved in neuraminidase activity. Residues asparagine 341 and asparagine 433 are each glycosylated (N-linked (GlcNAc...) asparagine; by host). Cystine bridges form between cysteine 344–cysteine 461 and cysteine 455–cysteine 465. Residues asparagine 481 and asparagine 538 are each glycosylated (N-linked (GlcNAc...) asparagine; by host). An intrachain disulfide couples cysteine 531 to cysteine 542.

Belongs to the paramyxoviruses hemagglutinin-neuraminidase family. As to quaternary structure, homotetramer; composed of disulfide-linked homodimers. Interacts with F protein trimer. Interacts with host CG-1B; this interaction inhibits viral adsorption and replication rather than internalization.

The protein localises to the virion membrane. It localises to the host cell membrane. The catalysed reaction is Hydrolysis of alpha-(2-&gt;3)-, alpha-(2-&gt;6)-, alpha-(2-&gt;8)- glycosidic linkages of terminal sialic acid residues in oligosaccharides, glycoproteins, glycolipids, colominic acid and synthetic substrates.. In terms of biological role, mediates the viral entry into the host cell together with fusion/F protein. Attaches the virus to sialic acid-containing cell receptors and thereby initiates infection. Binding of HN protein to the receptor induces a conformational change that allows the F protein to trigger virion/cell membranes fusion. Its function is as follows. Neuraminidase activity ensures the efficient spread of the virus by dissociating the mature virions from the neuraminic acid containing glycoproteins. This is Hemagglutinin-neuraminidase (HN) from Gallus gallus (Chicken).